Reading from the N-terminus, the 790-residue chain is Probable copper-transporting ATPase SynA (790 aa).

Residues 1–105 (MPAAIVHSAD…IPPLQQQRLQ (105 aa)) lie on the Cytoplasmic side of the membrane. The 68-residue stretch at 14–81 (TSILVEVEGM…EITGLGFRAQ (68 aa)) folds into the HMA domain. Residues Cys-25 and Cys-28 each coordinate Cu cation. The helical transmembrane segment at 106 to 125 (LAIAAFLLIVSSWGHLGHWL) threads the bilayer. Residues 126-134 (DHPLPGTDQ) lie on the Extracellular side of the membrane. The chain crosses the membrane as a helical span at residues 135 to 154 (LWFHALLAIWALLGPGRSIL). The Cytoplasmic portion of the chain corresponds to 155–166 (QAGWQGLRCGAP). Residues 167–189 (NMNSLVLLGTGSAYLASLVALLW) form a helical membrane-spanning segment. Topologically, residues 190-193 (PQLG) are extracellular. The helical transmembrane segment at 194–211 (WVCFLDEPVMLLGFILLG) threads the bilayer. The Cytoplasmic segment spans residues 212–357 (RTLEEQARFR…RKAPVQRFAD (146 aa)). The helical transmembrane segment at 358–380 (AIAGRFVYGVCAIAALTFGFWAT) threads the bilayer. At 381 to 416 (LGSRWWPQVLQQPLPGLLIHAPHHGMEMAHPHSHSP) the chain is on the extracellular side. Residues 417–439 (LLLALTLAISVLVVACPCALGLA) form a helical membrane-spanning segment. The Cytoplasmic segment spans residues 440–726 (TPTAILVATG…QMGLRTIRQN (287 aa)). Catalysis depends on Asp-476, which acts as the 4-aspartylphosphate intermediate. Asp-669 and Asp-673 together coordinate Mg(2+). Residues 727-749 (LTWALGYNVVMLPLAAGAFLPAY) traverse the membrane as a helical segment. The Extracellular segment spans residues 750 to 753 (GLAL). A helical transmembrane segment spans residues 754-776 (TPAIAGACMAVSSLAVVSNSLLL). Residues 777–790 (RYWFRRSLNHSVSV) are Cytoplasmic-facing.

This sequence belongs to the cation transport ATPase (P-type) (TC 3.A.3) family. Type IB subfamily.

Its subcellular location is the cell membrane. It catalyses the reaction Cu(2+)(in) + ATP + H2O = Cu(2+)(out) + ADP + phosphate + H(+). Involved in copper transport. The polypeptide is Probable copper-transporting ATPase SynA (synA) (Synechococcus sp. (strain ATCC 27144 / PCC 6301 / SAUG 1402/1) (Anacystis nidulans)).